The following is a 295-amino-acid chain: Large ribosomal subunit protein uL15m (295 aa).

The transit peptide at 1-20 (MAGTARGCGTSLDLLRSLPR) directs the protein to the mitochondrion. The disordered stretch occupies residues 21–67 (VSLANLKPSPNSRKRERRPRDRRRGRKCGRGHKGERQRGTRPRLGFE). Basic residues predominate over residues 32 to 51 (SRKRERRPRDRRRGRKCGRG).

The protein belongs to the universal ribosomal protein uL15 family. As to quaternary structure, component of the mitochondrial ribosome large subunit (39S) which comprises a 16S rRNA and about 50 distinct proteins.

Its subcellular location is the mitochondrion. This Mus musculus (Mouse) protein is Large ribosomal subunit protein uL15m (Mrpl15).